Consider the following 214-residue polypeptide: tRNA (guanine-N(7)-)-methyltransferase (214 aa).

4 residues coordinate S-adenosyl-L-methionine: E43, E68, D95, and D117. The active site involves D117. Substrate contacts are provided by residues K121, D153, and 190–193 (TEYE).

The protein belongs to the class I-like SAM-binding methyltransferase superfamily. TrmB family.

The catalysed reaction is guanosine(46) in tRNA + S-adenosyl-L-methionine = N(7)-methylguanosine(46) in tRNA + S-adenosyl-L-homocysteine. The protein operates within tRNA modification; N(7)-methylguanine-tRNA biosynthesis. Functionally, catalyzes the formation of N(7)-methylguanine at position 46 (m7G46) in tRNA. The chain is tRNA (guanine-N(7)-)-methyltransferase from Staphylococcus aureus (strain Mu3 / ATCC 700698).